The chain runs to 265 residues: Tryptophan synthase alpha chain (265 aa).

Active-site proton acceptor residues include Glu48 and Asp59.

This sequence belongs to the TrpA family. In terms of assembly, tetramer of two alpha and two beta chains.

It carries out the reaction (1S,2R)-1-C-(indol-3-yl)glycerol 3-phosphate + L-serine = D-glyceraldehyde 3-phosphate + L-tryptophan + H2O. It participates in amino-acid biosynthesis; L-tryptophan biosynthesis; L-tryptophan from chorismate: step 5/5. The alpha subunit is responsible for the aldol cleavage of indoleglycerol phosphate to indole and glyceraldehyde 3-phosphate. This Vesicomyosocius okutanii subsp. Calyptogena okutanii (strain HA) protein is Tryptophan synthase alpha chain.